A 552-amino-acid polypeptide reads, in one-letter code: Chaperonin GroEL (552 aa).

Residues 29-32, Lys-50, 86-90, Gly-420, and Asp-501 each bind ATP; these read TAGP and DGTTT.

It belongs to the chaperonin (HSP60) family. In terms of assembly, forms a cylinder of 14 subunits composed of two heptameric rings stacked back-to-back. Interacts with the co-chaperonin GroES.

Its subcellular location is the cytoplasm. It catalyses the reaction ATP + H2O + a folded polypeptide = ADP + phosphate + an unfolded polypeptide.. In terms of biological role, together with its co-chaperonin GroES, plays an essential role in assisting protein folding. The GroEL-GroES system forms a nano-cage that allows encapsulation of the non-native substrate proteins and provides a physical environment optimized to promote and accelerate protein folding. This is Chaperonin GroEL from Wolbachia pipientis subsp. Culex pipiens (strain wPip).